A 266-amino-acid chain; its full sequence is Indole-3-glycerol phosphate synthase (266 aa).

This sequence belongs to the TrpC family.

It carries out the reaction 1-(2-carboxyphenylamino)-1-deoxy-D-ribulose 5-phosphate + H(+) = (1S,2R)-1-C-(indol-3-yl)glycerol 3-phosphate + CO2 + H2O. The protein operates within amino-acid biosynthesis; L-tryptophan biosynthesis; L-tryptophan from chorismate: step 4/5. This chain is Indole-3-glycerol phosphate synthase, found in Paracidovorax citrulli (strain AAC00-1) (Acidovorax citrulli).